Here is a 289-residue protein sequence, read N- to C-terminus: MASGKEIRTKIKSVQNTRKITKAMEMVAASKMRKAQDRMRAARPYAEKIRRLAANLSQANVTDYKHAFLVQKDEVKRVGLILVTTDKGLCGGLNTNIQRVALNAMKGWDASGTTEIQACCIGNKGFGFMQRMGAKVVSHVVQLGDTPHLEKMIGPVKIMLDAFQNGELDAVYVAYTRFINTMKQEPVLEQLLPLTGEKLGTPEGSWDYLYEPDPQVVIDEMLVRYVEALVYQAVAENMASEQSARMVAMKAASDNAKNVIGELQLVYNKTRQAAITKELSEIVSGAAAV.

Belongs to the ATPase gamma chain family. F-type ATPases have 2 components, CF(1) - the catalytic core - and CF(0) - the membrane proton channel. CF(1) has five subunits: alpha(3), beta(3), gamma(1), delta(1), epsilon(1). CF(0) has three main subunits: a, b and c.

Its subcellular location is the cell inner membrane. In terms of biological role, produces ATP from ADP in the presence of a proton gradient across the membrane. The gamma chain is believed to be important in regulating ATPase activity and the flow of protons through the CF(0) complex. This Aromatoleum aromaticum (strain DSM 19018 / LMG 30748 / EbN1) (Azoarcus sp. (strain EbN1)) protein is ATP synthase gamma chain.